Consider the following 223-residue polypeptide: MAPAPVPALGTLGCYRFLFNPRQHLGPSFPARRYGAPRRLCFLPQNTGTPLRVLPSVFWSPPSRKKPVLSARNSRMFGHLSPVRIPHLRGKFNLRLPSLDEQVIPARLPKMEVRAEEPKEATEVKDQVETQEQEDNKRGPCSNGEAASTSRPLETQGNPTSPRYNPRPLEGNVQLKSLTENNQTDKAQVHAVSFYSKGHGVASSHSPAGGFPRGRTPPARQHG.

A compositionally biased stretch (basic and acidic residues) spans 110–138; sequence KMEVRAEEPKEATEVKDQVETQEQEDNKR. Residues 110–223 form a disordered region; it reads KMEVRAEEPK…GRTPPARQHG (114 aa). 2 stretches are compositionally biased toward polar residues: residues 145 to 163 and 174 to 186; these read EAAS…TSPR and QLKS…QTDK.

It belongs to the UPF0607 family.

The protein is Putative UPF0607 protein LOC392364 of Homo sapiens (Human).